Reading from the N-terminus, the 319-residue chain is Super small secreted glycoprotein (319 aa).

The first 32 residues, 1-32 (MGGLSLLQLPRDKFRKSSFFVWVIILFQKAFS), serve as a signal peptide directing secretion. N-linked (GlcNAc...) asparagine; by host glycosylation is present at Asn-40. Intrachain disulfides connect Cys-108–Cys-135 and Cys-121–Cys-147. Asn-204, Asn-208, Asn-238, Asn-257, and Asn-268 each carry an N-linked (GlcNAc...) asparagine; by host glycan.

This sequence belongs to the filoviruses glycoprotein family.

The protein localises to the secreted. The protein is Super small secreted glycoprotein (GP) of Sudan ebolavirus (strain Human/Uganda/Gulu/2000) (SEBOV).